The primary structure comprises 524 residues: Magnesium/proton exchanger 2 (524 aa).

The next 11 helical transmembrane spans lie at 28–48 (GVRAFIYTVVLAYCFIGLSAI), 88–108 (IADVALLAFGTSFPQISLATI), 125–145 (GTLVGSAAFDLFPIHAVCVVM), 157–177 (LGVWLVELFWSFWAYIWLYII), 185–205 (VITLWEALLTVLQYGLLLLHA), 325–345 (VIGISWNLIIAPWKMLFAFIP), 349–369 (IAHGWIAFICSLIFISGIAYG), 377–397 (ISCVTGVSPYVIAFTALAAGT), 430–450 (IYVGIGVPWLVDTMYNYLFVY), 462–482 (LSFSLLVFFATSFGCITVLVL), and 496–516 (MWAWATSVYFMILWVVFVVLS).

It belongs to the Ca(2+):cation antiporter (CaCA) (TC 2.A.19) family. MHX subfamily.

Its subcellular location is the vacuole membrane. Its function is as follows. Vacuolar transporter that exchanges protons with Mg(2+), Zn(2+) and Fe(2+) ions. May control the partitioning of Mg(2+) and Zn(2+) between plant organs. In Oryza sativa subsp. japonica (Rice), this protein is Magnesium/proton exchanger 2 (MHX2).